An 89-amino-acid chain; its full sequence is Acyl carrier protein MbtL (89 aa).

The Carrier domain occupies 8–83; that stretch reads NHVSAELLGI…DLQAAIAAEP (76 aa). At serine 43 the chain carries O-(pantetheine 4'-phosphoryl)serine.

Post-translationally, 4'-phosphopantetheine is transferred from CoA to a specific serine of apo-ACP, leading to the activated holo-ACP form.

The protein resides in the cytoplasm. Its pathway is siderophore biosynthesis; mycobactin biosynthesis. In terms of biological role, acyl carrier protein involved in the formation of acyl-S-ACP intermediates within the mycobactin biosynthesis process. The protein is Acyl carrier protein MbtL (mbtL) of Mycolicibacterium paratuberculosis (strain ATCC BAA-968 / K-10) (Mycobacterium paratuberculosis).